We begin with the raw amino-acid sequence, 700 residues long: MNPIVKSFEYGQHTVTLETGVIARQADAAVLASMGDTTVLVTVVGKKAEEPGRDFFPLTVNYQEKTYAAGKIPGGFFKREGRPSEGETLTARLIDRPIRPLFPNGFKNEVQVIITVVSVDPEISPEVISMIGTSAALSISGIPFNGPLGSARVGYVDGEYILNPTVSQLENSQLELSVAGTENAVLMVESEADALPEEVMLGAVVYGHEQQQVVIQAIKELKAEVNKPMWDWTAPVQNEELVAKVKDLAEAGLTEAYQIVVKQDRYAQVDVVKTAAKEALLAENPDADAREIDGLLGSLEKKVVRSRIIAGNPRIDGREPDMVRALSVMAGVLPRTHGSALFTRGETQALVTCTLGTERDAQKIDSIMGEQTSRFMLHYNFPPYSVGETGMVGSPKRREIGHGKLAWRGIHAVMPTAEEFPYSIRVVSEITESNGSSSMASVCGTSLALMDAGVPIKTSVAGIAMGLVKEGDDFVVLSDILGDEDHLGDMDFKVAGTRDGVTALQMDIKIEGITKEIMQIALQQAYGARVHILNVMDQAISGHRAEISDHAPRITTLKINPEKIRDVIGKGGATIRALTEETGTTIELEDDGTVKIASANGDATKEAIRRIQEITAEVEVGTVYNGKVVRIVDFGAFVTILPGKDGLVHISQIAEERVANVSDYLEVGQEVKVKVMEVDRQGRVRLSMKEAQPKEEAASE.

Mg(2+) contacts are provided by aspartate 485 and aspartate 491. The 60-residue stretch at 552-611 folds into the KH domain; that stretch reads PRITTLKINPEKIRDVIGKGGATIRALTEETGTTIELEDDGTVKIASANGDATKEAIRRI. Residues 621 to 689 form the S1 motif domain; that stretch reads GTVYNGKVVR…RQGRVRLSMK (69 aa).

Belongs to the polyribonucleotide nucleotidyltransferase family. As to quaternary structure, component of the RNA degradosome, which is a multiprotein complex involved in RNA processing and mRNA degradation. Mg(2+) serves as cofactor.

The protein resides in the cytoplasm. It catalyses the reaction RNA(n+1) + phosphate = RNA(n) + a ribonucleoside 5'-diphosphate. Functionally, involved in mRNA degradation. Catalyzes the phosphorolysis of single-stranded polyribonucleotides processively in the 3'- to 5'-direction. This is Polyribonucleotide nucleotidyltransferase from Shewanella loihica (strain ATCC BAA-1088 / PV-4).